Here is a 327-residue protein sequence, read N- to C-terminus: Interleukin-12 subunit beta (327 aa).

A signal peptide spans 1-22 (MHPQQLVVSWFSLVLLASPIVA). Residues 23–106 (MWELEKNVYV…LSRSLLLLHK (84 aa)) form the Ig-like C2-type domain. Residues Cys50 and Cys90 are joined by a disulfide bond. A glycan (N-linked (GlcNAc...) asparagine) is linked at Asn223. The Fibronectin type-III domain maps to 238-327 (PPKNLQLRPL…WSEWASVSCS (90 aa)).

It belongs to the IL-12B family. Heterodimer with IL12A; disulfide-linked. The heterodimer is known as interleukin IL-12. Heterodimer with IL23A; disulfide-linked. The heterodimer is known as interleukin IL-23. Also secreted as a monomer. Interacts with NBR1; this interaction promotes IL-12 secretion.

The protein resides in the secreted. Its function is as follows. Cytokine that can act as a growth factor for activated T and NK cells, enhance the lytic activity of NK/lymphokine-activated killer cells, and stimulate the production of IFN-gamma by resting PBMC. Associates with IL23A to form the IL-23 interleukin, a heterodimeric cytokine which functions in innate and adaptive immunity. IL-23 may constitute with IL-17 an acute response to infection in peripheral tissues. IL-23 binds to a heterodimeric receptor complex composed of IL12RB1 and IL23R, activates the Jak-Stat signaling cascade, stimulates memory rather than naive T-cells and promotes production of pro-inflammatory cytokines. IL-23 induces autoimmune inflammation and thus may be responsible for autoimmune inflammatory diseases and may be important for tumorigenesis. This chain is Interleukin-12 subunit beta (IL12B), found in Bos taurus (Bovine).